Consider the following 230-residue polypeptide: MMLKTVLRLPVCAALLALAAGCAMIPPEPVVTGPLTAPPPPPPQPSARPNGSIYQPSAYGNYPLFEDRRPRNVGDIVTIVLEEKTNAAKGVATNTSRDGSATLGVAAAPRFMDGIINDKLDTDISGGNTANGTGKSSANNTFTGTITTTVIGVLPNGNLQIAGEKQIAINRGSEYVRFSGVVDPRSITGSNTVSSTRVADARIEYRSKGVMDEVQTMGWLQRFFLIASPF.

The N-terminal stretch at 1-21 (MMLKTVLRLPVCAALLALAAG) is a signal peptide. The N-palmitoyl cysteine moiety is linked to residue Cys22. The S-diacylglycerol cysteine moiety is linked to residue Cys22. A disordered region spans residues 34–53 (PLTAPPPPPPQPSARPNGSI). Positions 36-46 (TAPPPPPPQPS) are enriched in pro residues.

Belongs to the FlgH family. In terms of assembly, the basal body constitutes a major portion of the flagellar organelle and consists of four rings (L,P,S, and M) mounted on a central rod.

The protein resides in the cell outer membrane. The protein localises to the bacterial flagellum basal body. Functionally, assembles around the rod to form the L-ring and probably protects the motor/basal body from shearing forces during rotation. This Bordetella bronchiseptica (strain ATCC BAA-588 / NCTC 13252 / RB50) (Alcaligenes bronchisepticus) protein is Flagellar L-ring protein.